The primary structure comprises 160 residues: General odorant-binding protein 2 (160 aa).

The signal sequence occupies residues 1–20 (MFSFLILVFVASVADSVIGT). 3 disulfides stabilise this stretch: Cys-38–Cys-73, Cys-69–Cys-127, and Cys-116–Cys-136.

The protein belongs to the PBP/GOBP family. As to quaternary structure, homodimer. Detected in antenna (at protein level). Expressed at high levels in antenna.

Present in the aqueous fluid surrounding olfactory sensory dendrites and are thought to aid in the capture and transport of hydrophobic odorants into and through this fluid. The polypeptide is General odorant-binding protein 2 (Bombyx mori (Silk moth)).